Reading from the N-terminus, the 316-residue chain is Probable 5-dehydro-4-deoxyglucarate dehydratase 1 (316 aa).

Belongs to the DapA family.

The enzyme catalyses 5-dehydro-4-deoxy-D-glucarate + H(+) = 2,5-dioxopentanoate + CO2 + H2O. It functions in the pathway carbohydrate acid metabolism; D-glucarate degradation; 2,5-dioxopentanoate from D-glucarate: step 2/2. This Streptomyces coelicolor (strain ATCC BAA-471 / A3(2) / M145) protein is Probable 5-dehydro-4-deoxyglucarate dehydratase 1.